A 387-amino-acid polypeptide reads, in one-letter code: Penicillopepsin-1 (387 aa).

A signal peptide spans 1 to 19 (MVNSKTVVSALALSALAAA). The propeptide at 20 to 66 (APAPSSTTSFSINQVAVKKPAIHPAVKYAKALAKYHAEIPSNVASAA) is activation peptide. The Peptidase A1 domain occupies 85 to 384 (YVTPITAGSS…DGDNLQLGFA (300 aa)). Active-site residues include aspartate 101 and aspartate 279. A glycan (N-linked (GlcNAc...) asparagine) is linked at asparagine 304. An intrachain disulfide couples cysteine 315 to cysteine 347.

This sequence belongs to the peptidase A1 family. Monomer.

It localises to the secreted. The enzyme catalyses Hydrolysis of proteins with broad specificity similar to that of pepsin A, preferring hydrophobic residues at P1 and P1', but also cleaving 20-Gly-|-Glu-21 in the B chain of insulin. Clots milk, and activates trypsinogen.. Its function is as follows. Secreted aspartic endopeptidase that allows assimilation of proteinaceous substrates. The scissile peptide bond is attacked by a nucleophilic water molecule activated by two aspartic residues in the active site. Shows a broad primary substrate specificity. Favors hydrophobic residues at the P1 and P1' positions, but can also activate trypsinogen and hydrolyze the B chain of insulin between positions 'Gly-20' and 'Glu-21'. The chain is Penicillopepsin-1 (pepA) from Talaromyces stipitatus (strain ATCC 10500 / CBS 375.48 / QM 6759 / NRRL 1006) (Penicillium stipitatum).